We begin with the raw amino-acid sequence, 859 residues long: Linoleate 9S-lipoxygenase B (859 aa).

Positions 34–158 (INIGASVVDG…RYKSDRIFFA (125 aa)) constitute a PLAT domain. The Lipoxygenase domain maps to 161 to 859 (AYLPSETPQP…GKGIPNSVSI (699 aa)). The interval 213–246 (EYARPILGGSSEYPYPRRGRTGREPTKADPNCES) is disordered. Residues 233-244 (TGREPTKADPNC) are compositionally biased toward basic and acidic residues. Fe cation contacts are provided by H521, H526, H711, and I859.

This sequence belongs to the lipoxygenase family. In terms of assembly, monomer. It depends on Fe cation as a cofactor. As to expression, fruit specific.

The protein localises to the cytoplasm. The catalysed reaction is (9Z,12Z)-octadecadienoate + O2 = (9S)-hydroperoxy-(10E,12Z)-octadecadienoate. Its pathway is lipid metabolism; oxylipin biosynthesis. In terms of biological role, plant lipoxygenase may be involved in a number of diverse aspects of plant physiology including growth and development, pest resistance, and senescence or responses to wounding. It catalyzes the hydroperoxidation of lipids containing a cis,cis-1,4-pentadiene structure. This is Linoleate 9S-lipoxygenase B (LOX1.2) from Solanum lycopersicum (Tomato).